The chain runs to 240 residues: UDP-2,3-diacylglucosamine hydrolase (240 aa).

Mn(2+)-binding residues include Asp-7, His-9, Asp-40, Asn-78, and His-113. 78-79 (NR) provides a ligand contact to substrate. Substrate contacts are provided by Asp-121, Ser-159, Lys-166, and His-194. Mn(2+)-binding residues include His-194 and His-196.

It belongs to the LpxH family. Mn(2+) serves as cofactor.

The protein resides in the cell inner membrane. The enzyme catalyses UDP-2-N,3-O-bis[(3R)-3-hydroxytetradecanoyl]-alpha-D-glucosamine + H2O = 2-N,3-O-bis[(3R)-3-hydroxytetradecanoyl]-alpha-D-glucosaminyl 1-phosphate + UMP + 2 H(+). It functions in the pathway glycolipid biosynthesis; lipid IV(A) biosynthesis; lipid IV(A) from (3R)-3-hydroxytetradecanoyl-[acyl-carrier-protein] and UDP-N-acetyl-alpha-D-glucosamine: step 4/6. Functionally, hydrolyzes the pyrophosphate bond of UDP-2,3-diacylglucosamine to yield 2,3-diacylglucosamine 1-phosphate (lipid X) and UMP by catalyzing the attack of water at the alpha-P atom. Involved in the biosynthesis of lipid A, a phosphorylated glycolipid that anchors the lipopolysaccharide to the outer membrane of the cell. This Pseudomonas putida (strain ATCC 47054 / DSM 6125 / CFBP 8728 / NCIMB 11950 / KT2440) protein is UDP-2,3-diacylglucosamine hydrolase.